The sequence spans 216 residues: Large ribosomal subunit protein uL4 (216 aa).

Residues 47 to 77 form a disordered region; it reads THKVKGMGEVSGTTKKPYRQKGTGNARQGSL.

The protein belongs to the universal ribosomal protein uL4 family. In terms of assembly, part of the 50S ribosomal subunit.

One of the primary rRNA binding proteins, this protein initially binds near the 5'-end of the 23S rRNA. It is important during the early stages of 50S assembly. It makes multiple contacts with different domains of the 23S rRNA in the assembled 50S subunit and ribosome. Its function is as follows. Forms part of the polypeptide exit tunnel. The chain is Large ribosomal subunit protein uL4 from Acidiphilium cryptum (strain JF-5).